The chain runs to 408 residues: Peptidase T (408 aa).

H78 contacts Zn(2+). D80 is a catalytic residue. D141 serves as a coordination point for Zn(2+). The active-site Proton acceptor is E175. Residues E176, D198, and H380 each coordinate Zn(2+).

It belongs to the peptidase M20B family. Requires Zn(2+) as cofactor.

The protein localises to the cytoplasm. It catalyses the reaction Release of the N-terminal residue from a tripeptide.. Its function is as follows. Cleaves the N-terminal amino acid of tripeptides. This chain is Peptidase T, found in Clostridium botulinum (strain ATCC 19397 / Type A).